A 390-amino-acid chain; its full sequence is Succinate--CoA ligase [ADP-forming] subunit beta (390 aa).

An ATP-grasp domain is found at 9–245 (KHLLKKYNIP…TTQEDEHETM (237 aa)). Residues Lys-46, 53 to 55 (GRG), Glu-99, Ser-102, and Glu-107 contribute to the ATP site. Asn-200 and Asp-214 together coordinate Mg(2+). Substrate is bound by residues Asn-265 and 322–324 (GIV).

It belongs to the succinate/malate CoA ligase beta subunit family. As to quaternary structure, heterotetramer of two alpha and two beta subunits. Mg(2+) serves as cofactor.

The enzyme catalyses succinate + ATP + CoA = succinyl-CoA + ADP + phosphate. It carries out the reaction GTP + succinate + CoA = succinyl-CoA + GDP + phosphate. Its pathway is carbohydrate metabolism; tricarboxylic acid cycle; succinate from succinyl-CoA (ligase route): step 1/1. In terms of biological role, succinyl-CoA synthetase functions in the citric acid cycle (TCA), coupling the hydrolysis of succinyl-CoA to the synthesis of either ATP or GTP and thus represents the only step of substrate-level phosphorylation in the TCA. The beta subunit provides nucleotide specificity of the enzyme and binds the substrate succinate, while the binding sites for coenzyme A and phosphate are found in the alpha subunit. This chain is Succinate--CoA ligase [ADP-forming] subunit beta, found in Coxiella burnetii (strain CbuG_Q212) (Coxiella burnetii (strain Q212)).